We begin with the raw amino-acid sequence, 352 residues long: B1 bradykinin receptor (352 aa).

At 1–41 (MASWPPLELQSSNQSQLFPQNATACDNAPEAWDLLHRVLPT) the chain is on the extracellular side. N-linked (GlcNAc...) asparagine glycosylation is found at Asn13 and Asn21. Residues 42 to 62 (FIISICSFGLLGNLFVLLVFL) traverse the membrane as a helical segment. Topologically, residues 63–72 (LPRRRLNVAE) are cytoplasmic. The helical transmembrane segment at 73-93 (IYLANLAASDLVFVLGLPFWA) threads the bilayer. At 94–110 (ENIWNQFNWPFGALLCR) the chain is on the extracellular side. Cys109 and Cys188 are joined by a disulfide. A helical membrane pass occupies residues 111-131 (GINGVIKANLFISIFLVVAIS). The Cytoplasmic portion of the chain corresponds to 132–153 (QDRYCLLVHPMASRRRQRRRQA). A helical transmembrane segment spans residues 154 to 174 (RVTCVLIWVVGGLLSIPTFLL). Topologically, residues 175–206 (RSIQAVPDLNITACILLLPHEAWHFARIVELN) are extracellular. An N-linked (GlcNAc...) asparagine glycan is attached at Asn184. Residues 207 to 227 (ILAFLLPLAAIVFFNYHILAS) form a helical membrane-spanning segment. The Cytoplasmic segment spans residues 228–250 (LRGREEVSRTRCGGRKDSKTTAL). The chain crosses the membrane as a helical span at residues 251–271 (ILTLVVAFLVCWAPYHFFAFL). Topologically, residues 272-294 (EFLFQVQAIRSCFWEDFIDLGLQ) are extracellular. The helical transmembrane segment at 295-315 (LANFLAFTNSSLNPVIYVFVG) threads the bilayer. The Cytoplasmic portion of the chain corresponds to 316–352 (RLFRTKVWELYKQCTPKSLAPISSSHRKEIFQLFWRN). Cys329 carries the S-palmitoyl cysteine lipid modification.

The protein belongs to the G-protein coupled receptor 1 family. Bradykinin receptor subfamily. BDKRB1 sub-subfamily.

The protein resides in the cell membrane. Functionally, this is a receptor for bradykinin. Could be a factor in chronic pain and inflammation. The protein is B1 bradykinin receptor (BDKRB1) of Chlorocebus pygerythrus (Vervet monkey).